The chain runs to 350 residues: Ceramide synthase 1 (350 aa).

Alanine 2 carries the N-acetylalanine modification. 6 helical membrane passes run 53 to 73, 103 to 123, 148 to 168, 176 to 196, 239 to 259, and 287 to 307; these read AHLA…WTAL, AWKF…LFGT, IAAA…ATLY, SVVM…SYAF, AADL…LYWF, and LLLL…AFAA. In terms of domain architecture, TLC spans 97 to 311; the sequence is AKMPESAWKF…IVAFAAKVLT (215 aa).

Post-translationally, acetylated. Deacetylation by SIRT3 increases enzyme activity and promotes mitochondrial ceramide accumulation.

The protein resides in the endoplasmic reticulum membrane. It catalyses the reaction a sphingoid base + octadecanoyl-CoA = an N-octadecanoyl-sphingoid base + CoA + H(+). The enzyme catalyses sphinganine + octadecanoyl-CoA = N-(octadecanoyl)-sphinganine + CoA + H(+). It carries out the reaction hexadecasphinganine + octadecanoyl-CoA = N-octadecanoylhexadecasphinganine + CoA + H(+). The catalysed reaction is sphing-4-enine + octadecanoyl-CoA = N-octadecanoylsphing-4-enine + CoA + H(+). It catalyses the reaction heptadecasphing-4-enine + octadecanoyl-CoA = N-octadecanoyl-heptadecasphing-4-enine + CoA + H(+). The enzyme catalyses 2-hydroxyoctadecanoyl-CoA + sphinganine = N-(2-hydroxyoctadecanoyl)-sphinganine + CoA + H(+). It carries out the reaction eicosanoyl-CoA + sphinganine = N-eicosanoylsphinganine + CoA + H(+). It functions in the pathway lipid metabolism; sphingolipid metabolism. Inhibited by fumonisin B1. Functionally, ceramide synthase that catalyzes the transfer of the acyl chain from acyl-CoA to a sphingoid base, with high selectivity toward stearoyl-CoA (octadecanoyl-CoA; C18:0-CoA). N-acylates sphinganine and sphingosine bases to form dihydroceramides and ceramides in de novo synthesis and salvage pathways, respectively. Plays a predominant role in skeletal muscle in regulating C18 ceramide and dihydroceramide levels with an impact on whole-body glucose metabolism and insulin sensitivity. Protects from diet-induced obesity by suppressing the uptake of glucose in multiple organs in a FGF21-dependent way. Generates C18 ceramides in the brain, playing a critical role in cerebellar development and Purkinje cell function. In response to cellular stress mediates mitophagy, a known defense mechanism against cell transformation and aging. Upon mitochondria fission, generates C18 ceramides that anchor lipidated MAP1LC3B/LC3B-II autophagolysosomes to outer mitochondrial membranes to eliminate damaged mitochondria. The polypeptide is Ceramide synthase 1 (Homo sapiens (Human)).